A 362-amino-acid chain; its full sequence is Ferrochelatase (362 aa).

The Fe cation site is built by H212 and E294.

The protein belongs to the ferrochelatase family.

It localises to the cytoplasm. The enzyme catalyses heme b + 2 H(+) = protoporphyrin IX + Fe(2+). It participates in porphyrin-containing compound metabolism; protoheme biosynthesis; protoheme from protoporphyrin-IX: step 1/1. Catalyzes the ferrous insertion into protoporphyrin IX. This chain is Ferrochelatase, found in Leptospira biflexa serovar Patoc (strain Patoc 1 / Ames).